We begin with the raw amino-acid sequence, 422 residues long: Glycine amidinotransferase, mitochondrial (422 aa).

The N-terminal 37 residues, 1–37 (MLRVRCVRGGSRGAEAVHYIGSMLRKGFVGWVQRSFQ), are a transit peptide targeting the mitochondrion. Residues Asp253 and His302 contribute to the active site. Cys406 (amidino-cysteine intermediate) is an active-site residue.

It belongs to the amidinotransferase family. Homodimer.

Its subcellular location is the mitochondrion inner membrane. The enzyme catalyses L-arginine + glycine = guanidinoacetate + L-ornithine. The protein operates within amine and polyamine biosynthesis; creatine biosynthesis; creatine from L-arginine and glycine: step 1/2. Catalyzes the biosynthesis of guanidinoacetate, the immediate precursor of creatine. Creatine plays a vital role in energy metabolism in muscle tissues. May play a role in embryonic and central nervous system development. This Xenopus tropicalis (Western clawed frog) protein is Glycine amidinotransferase, mitochondrial.